A 298-amino-acid polypeptide reads, in one-letter code: MDKNKVKLAIAPIGWTNDDMPELGKENSFQQIVSEMALAGFTGSEVGSKYPRDPAVLKPMLDIRGLEIVNAWFSTFFANGDREKTLDEFINHRDFLHAMGAKVIGCSEQSLSIQGTAKAVLEEKPHFSDEQWRLTVEGYNQLAKLAAEKGMTVGLHHHMGTAIQTCAEVDRFMAQTHDDVYLLFDTGHAYYSEGSQQAMLAMLEKHLARINHVHLKDVRDEVVAEVKAQRLSFLEGVKRGTFTVPGDGVIDFDPVFKILDDSGYRGWMVVEAEQDPARANPFEYALKARRYIRQHAGL.

This sequence belongs to the IolE/MocC family. Glutathione serves as cofactor. It depends on Co(2+) as a cofactor. Mn(2+) is required as a cofactor.

It carries out the reaction scyllo-inosose = 3D-3,5/4-trihydroxycyclohexane-1,2-dione + H2O. Functionally, catalyzes the dehydration of inosose (2-keto-myo-inositol, 2KMI or 2,4,6/3,5-pentahydroxycyclohexanone) to 3D-(3,5/4)-trihydroxycyclohexane-1,2-dione (D-2,3-diketo-4-deoxy-epi-inositol). This is Inosose dehydratase from Erwinia tasmaniensis (strain DSM 17950 / CFBP 7177 / CIP 109463 / NCPPB 4357 / Et1/99).